The primary structure comprises 152 residues: Large ribosomal subunit protein uL24 (152 aa).

The disordered stretch occupies residues 128-152; sequence VVEEKETSKTSEGGGKTIEETEGEK.

This sequence belongs to the universal ribosomal protein uL24 family. In terms of assembly, part of the 50S ribosomal subunit.

In terms of biological role, one of two assembly initiator proteins, it binds directly to the 5'-end of the 23S rRNA, where it nucleates assembly of the 50S subunit. Located at the polypeptide exit tunnel on the outside of the subunit. The polypeptide is Large ribosomal subunit protein uL24 (Staphylothermus marinus (strain ATCC 43588 / DSM 3639 / JCM 9404 / F1)).